We begin with the raw amino-acid sequence, 558 residues long: Urocanate hydratase (558 aa).

NAD(+)-binding positions include 54–55 (GG), Q132, 178–180 (GMG), E198, 244–245 (NA), 265–269 (QTSAH), 275–276 (YL), and Y324. C412 is a catalytic residue. Residue G494 participates in NAD(+) binding.

This sequence belongs to the urocanase family. Requires NAD(+) as cofactor.

Its subcellular location is the cytoplasm. It catalyses the reaction 4-imidazolone-5-propanoate = trans-urocanate + H2O. It functions in the pathway amino-acid degradation; L-histidine degradation into L-glutamate; N-formimidoyl-L-glutamate from L-histidine: step 2/3. In terms of biological role, catalyzes the conversion of urocanate to 4-imidazolone-5-propionate. This chain is Urocanate hydratase, found in Acinetobacter baumannii (strain SDF).